The following is a 247-amino-acid chain: MSTTPKHAYRRILLKLSGEALMGEEGFGIDPKVLERMAQEIKELVELGIEVGLVIGGGNLFRGEGLAKAGMNRVVGDHMGMLATVMNGLAMRDALHRAFVNARLMSAIPLNGVCDAYNWAEAISLLKSGRVVIFAAGTGNPFFTTDSAACLRGIEIEADAVLKGTKVDGVYDSDPAKNPDAVLYKKLSYSEVLDKELKVMDLAAFTLARDHNIPIRVFNMNTPGCLRAVVLGEDVGTVICHPEKQDN.

An ATP-binding site is contributed by 15–18 (KLSG). The tract at residues 23–28 (GEEGFG) is involved in allosteric activation by GTP. UMP is bound at residue G57. G58 and R62 together coordinate ATP. UMP is bound by residues D77 and 138–145 (TGNPFFTT). ATP contacts are provided by T165, Y171, and D174.

This sequence belongs to the UMP kinase family. In terms of assembly, homohexamer.

It localises to the cytoplasm. It catalyses the reaction UMP + ATP = UDP + ADP. The protein operates within pyrimidine metabolism; CTP biosynthesis via de novo pathway; UDP from UMP (UMPK route): step 1/1. Allosterically activated by GTP. Inhibited by UTP. Functionally, catalyzes the reversible phosphorylation of UMP to UDP. The protein is Uridylate kinase of Pseudoalteromonas atlantica (strain T6c / ATCC BAA-1087).